The following is a 316-amino-acid chain: Aspartate carbamoyltransferase catalytic subunit (316 aa).

Carbamoyl phosphate contacts are provided by arginine 66 and threonine 67. L-aspartate is bound at residue lysine 94. Residues arginine 116, histidine 146, and glutamine 149 each contribute to the carbamoyl phosphate site. L-aspartate is bound by residues arginine 180 and arginine 235. Positions 276 and 277 each coordinate carbamoyl phosphate.

This sequence belongs to the aspartate/ornithine carbamoyltransferase superfamily. ATCase family. In terms of assembly, heterododecamer (2C3:3R2) of six catalytic PyrB chains organized as two trimers (C3), and six regulatory PyrI chains organized as three dimers (R2).

It catalyses the reaction carbamoyl phosphate + L-aspartate = N-carbamoyl-L-aspartate + phosphate + H(+). Its pathway is pyrimidine metabolism; UMP biosynthesis via de novo pathway; (S)-dihydroorotate from bicarbonate: step 2/3. Catalyzes the condensation of carbamoyl phosphate and aspartate to form carbamoyl aspartate and inorganic phosphate, the committed step in the de novo pyrimidine nucleotide biosynthesis pathway. This chain is Aspartate carbamoyltransferase catalytic subunit, found in Stenotrophomonas maltophilia (strain K279a).